A 540-amino-acid chain; its full sequence is 2,3-bisphosphoglycerate-independent phosphoglycerate mutase (540 aa).

Residues aspartate 24 and serine 74 each coordinate Mn(2+). Serine 74 (phosphoserine intermediate) is an active-site residue. Residues histidine 135, 165 to 166 (RD), arginine 197, arginine 203, 268 to 271 (RPDR), and lysine 341 contribute to the substrate site. The Mn(2+) site is built by aspartate 408, histidine 412, aspartate 449, histidine 450, and histidine 467.

The protein belongs to the BPG-independent phosphoglycerate mutase family. As to quaternary structure, monomer. Mn(2+) serves as cofactor.

The catalysed reaction is (2R)-2-phosphoglycerate = (2R)-3-phosphoglycerate. Its pathway is carbohydrate degradation; glycolysis; pyruvate from D-glyceraldehyde 3-phosphate: step 3/5. In terms of biological role, catalyzes the interconversion of 2-phosphoglycerate and 3-phosphoglycerate. This Prochlorococcus marinus (strain MIT 9313) protein is 2,3-bisphosphoglycerate-independent phosphoglycerate mutase.